Reading from the N-terminus, the 531-residue chain is SWI/SNF-related matrix-associated actin-dependent regulator of chromatin subfamily D member 2 (531 aa).

Asymmetric dimethylarginine occurs at positions 81 and 104. Ser203 carries the phosphoserine modification. The disordered stretch occupies residues 205 to 227 (SKAEGDTAGTTGTPGGTPAGDKV). Thr217 carries the phosphothreonine modification. Lys226 is covalently cross-linked (Glycyl lysine isopeptide (Lys-Gly) (interchain with G-Cter in SUMO2)). One can recognise an SWIB/MDM2 domain in the interval 306 to 383 (HQPPQYKLDP…PMKLAGLLQH (78 aa)).

This sequence belongs to the SMARCD family. Component of the multiprotein chromatin-remodeling complexes SWI/SNF: SWI/SNF-A (BAF), SWI/SNF-B (PBAF) and related complexes. The canonical complex contains a catalytic subunit (either SMARCA4/BRG1/BAF190A or SMARCA2/BRM/BAF190B), and at least SMARCE1, ACTL6A/BAF53, SMARCC1/BAF155, SMARCC2/BAF170, and SMARCB1/SNF5/BAF47. Other subunits specific to each of the complexes may also be present permitting several possible combinations developmentally and tissue specific. Component of the BAF complex, which includes at least actin (ACTB), ARID1A/BAF250A, ARID1B/BAF250B, SMARCA2/BRM, SMARCA4/BRG1, ACTL6A/BAF53, ACTL6B/BAF53B, SMARCE1/BAF57, SMARCC1/BAF155, SMARCC2/BAF170, SMARCB1/SNF5/INI1, and one or more SMARCD1/BAF60A, SMARCD2/BAF60B, or SMARCD3/BAF60C. In muscle cells, the BAF complex also contains DPF3. Component of the SWI/SNF-B (PBAF) chromatin remodeling complex, at least composed of SMARCA4/BRG1, SMARCB1/BAF47/SNF5, ACTL6A/BAF53A or ACTL6B/BAF53B, SMARCE1/BAF57, SMARCD1/BAF60A, SMARCD2/BAF60B, perhaps SMARCD3/BAF60C, SMARCC1/BAF155, SMARCC2/BAF170, PBRM1/BAF180, ARID2/BAF200 and actin (ACTB). Interacts with UNKL. Interacts with CEBPE. Ubiquitinated through a signaling process involving RAC1 and the RING finger protein UNKL.

The protein resides in the nucleus. In terms of biological role, involved in transcriptional activation and repression of select genes by chromatin remodeling (alteration of DNA-nucleosome topology). Component of SWI/SNF chromatin remodeling complexes that carry out key enzymatic activities, changing chromatin structure by altering DNA-histone contacts within a nucleosome in an ATP-dependent manner. Critical regulator of myeloid differentiation, controlling granulocytopoiesis and the expression of genes involved in neutrophil granule formation. This chain is SWI/SNF-related matrix-associated actin-dependent regulator of chromatin subfamily D member 2 (SMARCD2), found in Bos taurus (Bovine).